The primary structure comprises 103 residues: MLLWVLFVILILTSGSHCSLPPSPPFRMQRHVDAIFTTNYRKLLSQLYARKVIQDIMNKQGERIQEQRARLSRQEDSMWTEDKQMTLESILQGFPRMKPSADA.

Residues 1–19 (MLLWVLFVILILTSGSHCS) form the signal peptide. Propeptides lie at residues 20–30 (LPPSPPFRMQR) and 74–103 (QEDS…SADA).

Belongs to the glucagon family.

It is found in the secreted. GRF is released by the hypothalamus and acts on the adenohypophyse to stimulate the secretion of growth hormone. This chain is Somatoliberin (Ghrh), found in Mus musculus (Mouse).